The chain runs to 131 residues: Cytochrome b5 (131 aa).

The Cytochrome b5 heme-binding domain maps to 3–79 (AKIFSLDEVS…LEEYLIGSLD (77 aa)). 2 residues coordinate heme: His-38 and His-62. A helical transmembrane segment spans residues 108 to 125 (IILPALAIIGALVYKYVI).

Belongs to the cytochrome b5 family.

It is found in the endoplasmic reticulum membrane. It localises to the microsome membrane. In terms of biological role, membrane bound hemoprotein which function as an electron carrier for several membrane bound oxygenases. The polypeptide is Cytochrome b5 (Rhizopus stolonifer (Rhizopus nigricans)).